The primary structure comprises 37 residues: MKVRPSVKKMCDNCKIIKRRGVIRVICATPKHKQRQG.

This sequence belongs to the bacterial ribosomal protein bL36 family.

In Helicobacter pylori (strain ATCC 700392 / 26695) (Campylobacter pylori), this protein is Large ribosomal subunit protein bL36.